We begin with the raw amino-acid sequence, 317 residues long: Malate dehydrogenase (317 aa).

Residues 7–13 (GAAGGIG) and D34 contribute to the NAD(+) site. The substrate site is built by R81 and R87. Residues N94 and 117-119 (VTN) each bind NAD(+). Substrate contacts are provided by N119 and R153. H177 functions as the Proton acceptor in the catalytic mechanism. M231 lines the NAD(+) pocket.

It belongs to the LDH/MDH superfamily. MDH type 1 family. As to quaternary structure, homodimer.

The enzyme catalyses (S)-malate + NAD(+) = oxaloacetate + NADH + H(+). In terms of biological role, catalyzes the reversible oxidation of malate to oxaloacetate. This chain is Malate dehydrogenase, found in Actinobacillus pleuropneumoniae serotype 7 (strain AP76).